A 443-amino-acid chain; its full sequence is tRNA (guanine-N(7)-)-methyltransferase non-catalytic subunit TRM82 (443 aa).

The tract at residues 67-93 (ASKKLKTNDGEPVAQPKKQAKVPKPGP) is disordered. WD repeat units lie at residues 97–137 (PVYQ…KDNI), 193–235 (GHVS…IVDK), and 239–279 (GHEE…LLFK).

The protein belongs to the WD repeat TRM82 family. In terms of assembly, forms a heterodimer with the catalytic subunit TRM8.

The protein resides in the nucleus. It functions in the pathway tRNA modification; N(7)-methylguanine-tRNA biosynthesis. In terms of biological role, required for the formation of N(7)-methylguanine at position 46 (m7G46) in tRNA. In the complex, it is required to stabilize and induce conformational changes of the catalytic subunit. This chain is tRNA (guanine-N(7)-)-methyltransferase non-catalytic subunit TRM82, found in Kluyveromyces lactis (strain ATCC 8585 / CBS 2359 / DSM 70799 / NBRC 1267 / NRRL Y-1140 / WM37) (Yeast).